A 272-amino-acid chain; its full sequence is Dermonecrotic toxin SpeSicTox-betaIB1b (272 aa).

Histidine 5 is an active-site residue. Mg(2+) contacts are provided by glutamate 25 and aspartate 27. Histidine 41 (nucleophile) is an active-site residue. Disulfide bonds link cysteine 45-cysteine 51 and cysteine 47-cysteine 191. Aspartate 85 contacts Mg(2+).

Belongs to the arthropod phospholipase D family. Class II subfamily. Mg(2+) is required as a cofactor. In terms of tissue distribution, expressed by the venom gland.

The protein resides in the secreted. It catalyses the reaction an N-(acyl)-sphingosylphosphocholine = an N-(acyl)-sphingosyl-1,3-cyclic phosphate + choline. It carries out the reaction an N-(acyl)-sphingosylphosphoethanolamine = an N-(acyl)-sphingosyl-1,3-cyclic phosphate + ethanolamine. The enzyme catalyses a 1-acyl-sn-glycero-3-phosphocholine = a 1-acyl-sn-glycero-2,3-cyclic phosphate + choline. The catalysed reaction is a 1-acyl-sn-glycero-3-phosphoethanolamine = a 1-acyl-sn-glycero-2,3-cyclic phosphate + ethanolamine. Functionally, dermonecrotic toxins cleave the phosphodiester linkage between the phosphate and headgroup of certain phospholipids (sphingolipid and lysolipid substrates), forming an alcohol (often choline) and a cyclic phosphate. This toxin acts on sphingomyelin (SM). It may also act on ceramide phosphoethanolamine (CPE), lysophosphatidylcholine (LPC) and lysophosphatidylethanolamine (LPE), but not on lysophosphatidylserine (LPS), and lysophosphatidylglycerol (LPG). It acts by transphosphatidylation, releasing exclusively cyclic phosphate products as second products. Induces dermonecrosis, hemolysis, increased vascular permeability, edema, inflammatory response, and platelet aggregation. The sequence is that of Dermonecrotic toxin SpeSicTox-betaIB1b from Sicarius peruensis (Six-eyed sand spider).